The chain runs to 417 residues: Gamma-glutamyl phosphate reductase (417 aa).

This sequence belongs to the gamma-glutamyl phosphate reductase family.

It is found in the cytoplasm. It catalyses the reaction L-glutamate 5-semialdehyde + phosphate + NADP(+) = L-glutamyl 5-phosphate + NADPH + H(+). The protein operates within amino-acid biosynthesis; L-proline biosynthesis; L-glutamate 5-semialdehyde from L-glutamate: step 2/2. Its function is as follows. Catalyzes the NADPH-dependent reduction of L-glutamate 5-phosphate into L-glutamate 5-semialdehyde and phosphate. The product spontaneously undergoes cyclization to form 1-pyrroline-5-carboxylate. The chain is Gamma-glutamyl phosphate reductase from Legionella pneumophila subsp. pneumophila (strain Philadelphia 1 / ATCC 33152 / DSM 7513).